The following is a 554-amino-acid chain: Chaperonin GroEL (554 aa).

ATP is bound by residues 30 to 33 (TLGP), Lys-51, 87 to 91 (DGTTT), Gly-415, 478 to 480 (DAA), and Asp-494.

The protein belongs to the chaperonin (HSP60) family. As to quaternary structure, forms a cylinder of 14 subunits composed of two heptameric rings stacked back-to-back. Interacts with the co-chaperonin GroES.

It is found in the cytoplasm. The enzyme catalyses ATP + H2O + a folded polypeptide = ADP + phosphate + an unfolded polypeptide.. In terms of biological role, together with its co-chaperonin GroES, plays an essential role in assisting protein folding. The GroEL-GroES system forms a nano-cage that allows encapsulation of the non-native substrate proteins and provides a physical environment optimized to promote and accelerate protein folding. In Pelobacter propionicus (strain DSM 2379 / NBRC 103807 / OttBd1), this protein is Chaperonin GroEL.